The primary structure comprises 235 residues: Ribosomal RNA small subunit methyltransferase G (235 aa).

S-adenosyl-L-methionine is bound by residues glycine 75, phenylalanine 80, 126–127 (AE), and arginine 145.

Belongs to the methyltransferase superfamily. RNA methyltransferase RsmG family.

The protein localises to the cytoplasm. Its function is as follows. Specifically methylates the N7 position of a guanine in 16S rRNA. The protein is Ribosomal RNA small subunit methyltransferase G of Carboxydothermus hydrogenoformans (strain ATCC BAA-161 / DSM 6008 / Z-2901).